We begin with the raw amino-acid sequence, 586 residues long: Clathrin heavy chain linker domain-containing protein 1 (586 aa).

A coiled-coil region spans residues 174-232 (MNLDALTKYMKHLEDKYAEIKQAMLIKYVPAQRKADLDEEMIVLLKRRDVAENLNKKLQ).

The chain is Clathrin heavy chain linker domain-containing protein 1 (CLHC1) from Homo sapiens (Human).